A 162-amino-acid polypeptide reads, in one-letter code: Fibroblast growth factor 22 (162 aa).

The signal sequence occupies residues 1 to 22 (MRSRLWLGLAWLLLARAPGAPG).

This sequence belongs to the heparin-binding growth factors family. In terms of assembly, interacts with FGFR1 and FGFR2. Interacts with FGFBP1. In terms of tissue distribution, preferentially expressed in skin; low expression in brain. Expressed in the inner root sheath of the hair follicle.

The protein resides in the secreted. In terms of biological role, plays a role in the fasting response, glucose homeostasis, lipolysis and lipogenesis. Can stimulate cell proliferation (in vitro). May be involved in hair development. The protein is Fibroblast growth factor 22 (Fgf22) of Mus musculus (Mouse).